A 96-amino-acid chain; its full sequence is Prokineticin Bo8 (96 aa).

An N-terminal signal peptide occupies residues 1-19 (MKCFAQIVVLLLVIAFSHG). Cystine bridges form between cysteine 26–cysteine 38, cysteine 32–cysteine 50, cysteine 37–cysteine 78, cysteine 60–cysteine 86, and cysteine 80–cysteine 95.

In terms of tissue distribution, expressed by the skin glands.

The protein localises to the secreted. Potent agonist for both PKR1/PROKR1 and PKR2/PROKR2, and inducer of a potent and long-lasting hyperalgesia. Also potentiates capsaicin-induced TRPV1 current, when tested on DRG neurons. At subnanomolar concentrations, this protein both induces potent chemotaxis of macrophages and stimulates LPS-induced production of the pro-inflammatory cytokines IL-1 and IL-12. In vivo, potently stimulates the contraction of the guinea-pig gastrointestinal (GI) smooth muscle (nanomolar concentration). In Bombina orientalis (Oriental fire-bellied toad), this protein is Prokineticin Bo8.